Here is a 433-residue protein sequence, read N- to C-terminus: C2H2 type master regulator of conidiophore development brlA (433 aa).

Disordered regions lie at residues 23-54 (PSEC…SMAS) and 238-268 (TFKS…RMSG). Low complexity predominate over residues 30–48 (TSSFSPLDSPTPTPTSLYS). The segment covering 238–264 (TFKSHTPSTPHRSVSMGTPSGSDTPVS) has biased composition (polar residues). C2H2-type zinc fingers lie at residues 321-345 (FKCK…MKSH) and 351-376 (HVCW…TKTH). A disordered region spans residues 391 to 423 (ETSQDFDPDFRGQLTPDGRPIYGSKLEDSMPDC).

The protein localises to the nucleus. In terms of biological role, brlA, abaA and wetA are pivotal regulators of conidiophore development and conidium maturation. They act individually and together to regulate their own expression and that of numerous other sporulation-specific genes. Binds promoters of target genes at brlA response elements (BREs) containing the conserved sequence 5'-(C/A)(A/G)AGGG(G/A)-3'. The polypeptide is C2H2 type master regulator of conidiophore development brlA (Penicillium camemberti (strain FM 013)).